Here is a 296-residue protein sequence, read N- to C-terminus: Nitrogenase iron protein (296 aa).

ATP is bound at residue 12–19; sequence GKGGIGKS. Cysteine 100 contacts [4Fe-4S] cluster. At arginine 103 the chain carries ADP-ribosylarginine; by dinitrogenase reductase ADP-ribosyltransferase. Cysteine 134 is a [4Fe-4S] cluster binding site.

This sequence belongs to the NifH/BchL/ChlL family. In terms of assembly, homodimer. The cofactor is [4Fe-4S] cluster. In terms of processing, the reversible ADP-ribosylation of Arg-103 inactivates the nitrogenase reductase and regulates nitrogenase activity.

The catalysed reaction is N2 + 8 reduced [2Fe-2S]-[ferredoxin] + 16 ATP + 16 H2O = H2 + 8 oxidized [2Fe-2S]-[ferredoxin] + 2 NH4(+) + 16 ADP + 16 phosphate + 6 H(+). Its function is as follows. The key enzymatic reactions in nitrogen fixation are catalyzed by the nitrogenase complex, which has 2 components: the iron protein and the molybdenum-iron protein. In Acidithiobacillus ferrooxidans (strain ATCC 23270 / DSM 14882 / CIP 104768 / NCIMB 8455) (Ferrobacillus ferrooxidans (strain ATCC 23270)), this protein is Nitrogenase iron protein.